The sequence spans 565 residues: Proline--tRNA ligase (565 aa).

Belongs to the class-II aminoacyl-tRNA synthetase family. ProS type 1 subfamily. As to quaternary structure, homodimer.

Its subcellular location is the cytoplasm. It carries out the reaction tRNA(Pro) + L-proline + ATP = L-prolyl-tRNA(Pro) + AMP + diphosphate. Its function is as follows. Catalyzes the attachment of proline to tRNA(Pro) in a two-step reaction: proline is first activated by ATP to form Pro-AMP and then transferred to the acceptor end of tRNA(Pro). As ProRS can inadvertently accommodate and process non-cognate amino acids such as alanine and cysteine, to avoid such errors it has two additional distinct editing activities against alanine. One activity is designated as 'pretransfer' editing and involves the tRNA(Pro)-independent hydrolysis of activated Ala-AMP. The other activity is designated 'posttransfer' editing and involves deacylation of mischarged Ala-tRNA(Pro). The misacylated Cys-tRNA(Pro) is not edited by ProRS. This is Proline--tRNA ligase from Lactobacillus johnsonii (strain CNCM I-12250 / La1 / NCC 533).